A 441-amino-acid chain; its full sequence is Signal recognition particle 54 kDa protein (441 aa).

GTP-binding positions include 103-110 (GVQGSGKT), 184-188 (DTAGR), and 244-247 (TKMD).

It belongs to the GTP-binding SRP family. SRP54 subfamily. As to quaternary structure, part of the signal recognition particle protein translocation system, which is composed of SRP and FtsY. Archaeal SRP consists of a 7S RNA molecule of 300 nucleotides and two protein subunits: SRP54 and SRP19.

It localises to the cytoplasm. It carries out the reaction GTP + H2O = GDP + phosphate + H(+). Involved in targeting and insertion of nascent membrane proteins into the cytoplasmic membrane. Binds to the hydrophobic signal sequence of the ribosome-nascent chain (RNC) as it emerges from the ribosomes. The SRP-RNC complex is then targeted to the cytoplasmic membrane where it interacts with the SRP receptor FtsY. This Aeropyrum pernix (strain ATCC 700893 / DSM 11879 / JCM 9820 / NBRC 100138 / K1) protein is Signal recognition particle 54 kDa protein.